The primary structure comprises 233 residues: Large ribosomal subunit protein uL1 (233 aa).

The protein belongs to the universal ribosomal protein uL1 family. In terms of assembly, part of the 50S ribosomal subunit.

Its function is as follows. Binds directly to 23S rRNA. The L1 stalk is quite mobile in the ribosome, and is involved in E site tRNA release. Functionally, protein L1 is also a translational repressor protein, it controls the translation of the L11 operon by binding to its mRNA. The protein is Large ribosomal subunit protein uL1 of Syntrophomonas wolfei subsp. wolfei (strain DSM 2245B / Goettingen).